The chain runs to 625 residues: Endoglucanase D (625 aa).

An N-terminal signal peptide occupies residues 1 to 17; sequence SLTGVFPSGLIETKVSA. The Nucleophile role is filled by Asp177. Active-site residues include His492 and Asp522. Glu531 serves as the catalytic Proton donor. One can recognise a Dockerin domain in the interval 555-625; that stretch reads NEVLYGDVND…LIRVIEKLPI (71 aa).

This sequence belongs to the glycosyl hydrolase 9 (cellulase E) family. The cofactor is Ca(2+).

The enzyme catalyses Endohydrolysis of (1-&gt;4)-beta-D-glucosidic linkages in cellulose, lichenin and cereal beta-D-glucans.. Functionally, this enzyme catalyzes the endohydrolysis of 1,4-beta-glucosidic linkages in cellulose, lichenin and cereal beta-D-glucans. The protein is Endoglucanase D (celD) of Acetivibrio thermocellus (Hungateiclostridium thermocellum).